The sequence spans 74 residues: DNA-directed RNA polymerase subunit omega (74 aa).

This sequence belongs to the RNA polymerase subunit omega family. As to quaternary structure, the RNAP catalytic core consists of 2 alpha, 1 beta, 1 beta' and 1 omega subunit. When a sigma factor is associated with the core the holoenzyme is formed, which can initiate transcription.

It catalyses the reaction RNA(n) + a ribonucleoside 5'-triphosphate = RNA(n+1) + diphosphate. Functionally, promotes RNA polymerase assembly. Latches the N- and C-terminal regions of the beta' subunit thereby facilitating its interaction with the beta and alpha subunits. This is DNA-directed RNA polymerase subunit omega from Lactobacillus acidophilus (strain ATCC 700396 / NCK56 / N2 / NCFM).